The following is a 328-amino-acid chain: Gonadotropin-releasing hormone receptor (328 aa).

Residues 1 to 38 are Extracellular-facing; it reads MANSDSPEQNENHCSSINSSIPLTPGSLPTLTLSGKIR. Asn18 is a glycosylation site (N-linked (GlcNAc...) asparagine). The chain crosses the membrane as a helical span at residues 39–58; the sequence is VTVTFFLFLLSTIFNTSFLL. The Cytoplasmic portion of the chain corresponds to 59-77; sequence KLQNWTQRKEKRKKLSRMK. A helical membrane pass occupies residues 78–97; it reads LLLKHLTLANLLETLIVMPL. Residues 98-115 lie on the Extracellular side of the membrane; the sequence is DGMWNITVQWYAGELLCK. A glycan (N-linked (GlcNAc...) asparagine) is linked at Asn102. Cys114 and Cys196 are disulfide-bonded. The helical transmembrane segment at 116-137 threads the bilayer; it reads VLSYLKLFSMYAPAFMMVVISL. The Cytoplasmic portion of the chain corresponds to 138–164; the sequence is DRSLAITKPLAVKSNSKLGQFMIGLAW. Residues 165 to 184 traverse the membrane as a helical segment; that stretch reads LLSSIFAGPQLYIFGMIHLA. Residues 185 to 212 are Extracellular-facing; the sequence is DDSGQTEGFSQCVTHCSFPQWWHQAFYN. The chain crosses the membrane as a helical span at residues 213–232; the sequence is FFTFSCLFIIPLLIMVICNA. At 233–281 the chain is on the cytoplasmic side; it reads KIIFTLTRVLHQDPHKLQLNQSKNNIPRARLRTLKMTVAFATSFTVCWT. A helical transmembrane segment spans residues 282–300; the sequence is PYYVLGIWYWFDPDMVNRV. At 301–306 the chain is on the extracellular side; the sequence is SDPVNH. A helical transmembrane segment spans residues 307–326; it reads FFFLFAFLNPCFNPLIYGYF. The Cytoplasmic segment spans residues 327 to 328; the sequence is SL.

Belongs to the G-protein coupled receptor 1 family.

Its subcellular location is the cell membrane. Functionally, receptor for gonadotropin releasing hormone (GnRH) that mediates the action of GnRH to stimulate the secretion of the gonadotropic hormones luteinizing hormone (LH) and follicle-stimulating hormone (FSH). This receptor mediates its action by association with G-proteins that activate a phosphatidylinositol-calcium second messenger system. The polypeptide is Gonadotropin-releasing hormone receptor (GNRHR) (Bos mutus grunniens (Wild yak)).